The chain runs to 383 residues: 8-amino-7-oxononanoate synthase (383 aa).

Arg23 is a substrate binding site. 110-111 (GF) provides a ligand contact to pyridoxal 5'-phosphate. His135 lines the substrate pocket. Pyridoxal 5'-phosphate-binding residues include Ser181, His209, and Thr235. Lys238 bears the N6-(pyridoxal phosphate)lysine mark. A substrate-binding site is contributed by Thr351.

The protein belongs to the class-II pyridoxal-phosphate-dependent aminotransferase family. BioF subfamily. As to quaternary structure, homodimer. Pyridoxal 5'-phosphate serves as cofactor.

The catalysed reaction is 6-carboxyhexanoyl-[ACP] + L-alanine + H(+) = (8S)-8-amino-7-oxononanoate + holo-[ACP] + CO2. It functions in the pathway cofactor biosynthesis; biotin biosynthesis. Its function is as follows. Catalyzes the decarboxylative condensation of pimeloyl-[acyl-carrier protein] and L-alanine to produce 8-amino-7-oxononanoate (AON), [acyl-carrier protein], and carbon dioxide. This is 8-amino-7-oxononanoate synthase from Aliivibrio salmonicida (strain LFI1238) (Vibrio salmonicida (strain LFI1238)).